Reading from the N-terminus, the 439-residue chain is Divalent metal cation transporter MntH 1 (439 aa).

9 helical membrane-spanning segments follow: residues 64–84, 139–161, 171–191, 214–234, 262–282, 300–320, 359–379, 380–400, and 418–438; these read FGYALLFVVVLASFSGMLLQS, LLGVSITTGVVLTAFDTLIVLAL, AIVLGLIATIGACFFVELVLI, PLYLAIGILGATVMPHNLYLH, IGSLSLALLVNAAILILAAAA, LLDPLVGGALASFLFGFALLA, LVPALIGVLWLGEAAVGKLLV, LSQVVLSLQLPFALWPLIRFS, and LAWSLFGLISAANLTLLYFWF.

The protein belongs to the NRAMP family.

It is found in the cell inner membrane. H(+)-stimulated, divalent metal cation uptake system. This is Divalent metal cation transporter MntH 1 from Pseudomonas aeruginosa (strain ATCC 15692 / DSM 22644 / CIP 104116 / JCM 14847 / LMG 12228 / 1C / PRS 101 / PAO1).